The primary structure comprises 143 residues: Large ribosomal subunit protein uL11 (143 aa).

This sequence belongs to the universal ribosomal protein uL11 family. In terms of assembly, part of the ribosomal stalk of the 50S ribosomal subunit. Interacts with L10 and the large rRNA to form the base of the stalk. L10 forms an elongated spine to which L12 dimers bind in a sequential fashion forming a multimeric L10(L12)X complex. One or more lysine residues are methylated.

In terms of biological role, forms part of the ribosomal stalk which helps the ribosome interact with GTP-bound translation factors. This chain is Large ribosomal subunit protein uL11, found in Burkholderia mallei (strain NCTC 10247).